Reading from the N-terminus, the 325-residue chain is Phenylalanine--tRNA ligase alpha subunit (325 aa).

Glu-251 provides a ligand contact to Mg(2+).

This sequence belongs to the class-II aminoacyl-tRNA synthetase family. Phe-tRNA synthetase alpha subunit type 1 subfamily. Tetramer of two alpha and two beta subunits. The cofactor is Mg(2+).

The protein resides in the cytoplasm. The catalysed reaction is tRNA(Phe) + L-phenylalanine + ATP = L-phenylalanyl-tRNA(Phe) + AMP + diphosphate + H(+). This is Phenylalanine--tRNA ligase alpha subunit from Thermotoga neapolitana (strain ATCC 49049 / DSM 4359 / NBRC 107923 / NS-E).